The following is a 375-amino-acid chain: 23S rRNA (uracil(747)-C(5))-methyltransferase RlmC (375 aa).

The [4Fe-4S] cluster site is built by Cys3, Cys11, Cys14, and Cys87. Gln212, Phe241, Glu262, and Asn307 together coordinate S-adenosyl-L-methionine. Residue Cys334 is the Nucleophile of the active site.

This sequence belongs to the class I-like SAM-binding methyltransferase superfamily. RNA M5U methyltransferase family. RlmC subfamily.

The enzyme catalyses uridine(747) in 23S rRNA + S-adenosyl-L-methionine = 5-methyluridine(747) in 23S rRNA + S-adenosyl-L-homocysteine + H(+). Functionally, catalyzes the formation of 5-methyl-uridine at position 747 (m5U747) in 23S rRNA. The polypeptide is 23S rRNA (uracil(747)-C(5))-methyltransferase RlmC (Salmonella arizonae (strain ATCC BAA-731 / CDC346-86 / RSK2980)).